The chain runs to 426 residues: MKQLRLEPVVQVRGEINIPGSKSISNRALLLATLAQGTTTLTNLLDSDDIRHMLASLKQLGVNYRLSQNNTVCELDGLGGVISSESAQELFLGNAGTAMRPLCAALTLGQGEFTLTGEPRMEERPIGDLVDALRQLGANVVYLKNDGFPPLTINATGLSGGDVEIAGDLSSQFLTALLMVAPLAKGSVNIHVKGELVSKPYIDITLALMAQFGVTVINHDYARFEIVAGQRYVSPGKVLVEGDASSASYFLAAGAIKGGEVKVTGVGRLSIQGDVKFADVLEKMGADIEWGDDYIIARGSQLTAVDLDMNHIPDAAMTIATAALFAKGTTVIRNIYNWRIKETDRLAAMATELRKVGAEVEEGNDYIKITPPAVINTAEIDTYNDHRMAMCFSMLAFADCGITINDPDCTSKTFPDYFKQFASLQG.

3-phosphoshikimate is bound by residues Lys22, Ser23, and Arg27. Lys22 contributes to the phosphoenolpyruvate binding site. Residues Gly96 and Arg124 each contribute to the phosphoenolpyruvate site. 3-phosphoshikimate is bound by residues Ser170, Ser171, Gln172, Ser198, Asp314, Asn337, and Lys341. Phosphoenolpyruvate is bound at residue Gln172. The active-site Proton acceptor is the Asp314. Residues Arg345, Arg387, and Lys412 each coordinate phosphoenolpyruvate.

Belongs to the EPSP synthase family. As to quaternary structure, monomer.

Its subcellular location is the cytoplasm. It catalyses the reaction 3-phosphoshikimate + phosphoenolpyruvate = 5-O-(1-carboxyvinyl)-3-phosphoshikimate + phosphate. It participates in metabolic intermediate biosynthesis; chorismate biosynthesis; chorismate from D-erythrose 4-phosphate and phosphoenolpyruvate: step 6/7. Functionally, catalyzes the transfer of the enolpyruvyl moiety of phosphoenolpyruvate (PEP) to the 5-hydroxyl of shikimate-3-phosphate (S3P) to produce enolpyruvyl shikimate-3-phosphate and inorganic phosphate. This chain is 3-phosphoshikimate 1-carboxyvinyltransferase, found in Shewanella baltica (strain OS155 / ATCC BAA-1091).